Reading from the N-terminus, the 146-residue chain is Putative pre-16S rRNA nuclease (146 aa).

The protein belongs to the YqgF nuclease family.

Its subcellular location is the cytoplasm. In terms of biological role, could be a nuclease involved in processing of the 5'-end of pre-16S rRNA. The polypeptide is Putative pre-16S rRNA nuclease (Burkholderia pseudomallei (strain 668)).